Reading from the N-terminus, the 277-residue chain is Putative hydro-lyase SCO1412 (277 aa).

It belongs to the D-glutamate cyclase family.

The chain is Putative hydro-lyase SCO1412 from Streptomyces coelicolor (strain ATCC BAA-471 / A3(2) / M145).